Consider the following 436-residue polypeptide: Peptidase B (436 aa).

Mn(2+) contacts are provided by K201 and D206. Residue K213 is part of the active site. Positions 224, 283, and 285 each coordinate Mn(2+). R287 is a catalytic residue.

The protein belongs to the peptidase M17 family. As to quaternary structure, homohexamer. The cofactor is Mn(2+).

The protein localises to the cytoplasm. It catalyses the reaction Release of an N-terminal amino acid, Xaa, from a peptide or arylamide. Xaa is preferably Glu or Asp but may be other amino acids, including Leu, Met, His, Cys and Gln.. In terms of biological role, probably plays an important role in intracellular peptide degradation. This Pectobacterium atrosepticum (strain SCRI 1043 / ATCC BAA-672) (Erwinia carotovora subsp. atroseptica) protein is Peptidase B.